The chain runs to 152 residues: Xanthine-guanine phosphoribosyltransferase (152 aa).

Residues 37–38 (RG), arginine 69, and 88–96 (DDLVDTGGT) each bind 5-phospho-alpha-D-ribose 1-diphosphate. Position 69 (arginine 69) interacts with GMP. Aspartate 89 lines the Mg(2+) pocket. Guanine-binding residues include aspartate 92 and isoleucine 135. 2 residues coordinate xanthine: aspartate 92 and isoleucine 135. GMP-binding positions include 92–96 (DTGGT) and 134–135 (WI).

Belongs to the purine/pyrimidine phosphoribosyltransferase family. XGPT subfamily. Homotetramer. It depends on Mg(2+) as a cofactor.

The protein localises to the cell inner membrane. It carries out the reaction GMP + diphosphate = guanine + 5-phospho-alpha-D-ribose 1-diphosphate. The enzyme catalyses XMP + diphosphate = xanthine + 5-phospho-alpha-D-ribose 1-diphosphate. The catalysed reaction is IMP + diphosphate = hypoxanthine + 5-phospho-alpha-D-ribose 1-diphosphate. The protein operates within purine metabolism; GMP biosynthesis via salvage pathway; GMP from guanine: step 1/1. It participates in purine metabolism; XMP biosynthesis via salvage pathway; XMP from xanthine: step 1/1. Purine salvage pathway enzyme that catalyzes the transfer of the ribosyl-5-phosphate group from 5-phospho-alpha-D-ribose 1-diphosphate (PRPP) to the N9 position of the 6-oxopurines guanine and xanthine to form the corresponding ribonucleotides GMP (guanosine 5'-monophosphate) and XMP (xanthosine 5'-monophosphate), with the release of PPi. To a lesser extent, also acts on hypoxanthine. This chain is Xanthine-guanine phosphoribosyltransferase, found in Escherichia coli O127:H6 (strain E2348/69 / EPEC).